A 354-amino-acid polypeptide reads, in one-letter code: N-acetyl-gamma-glutamyl-phosphate reductase (354 aa).

Cysteine 156 is a catalytic residue.

Belongs to the NAGSA dehydrogenase family. Type 1 subfamily.

It is found in the cytoplasm. The enzyme catalyses N-acetyl-L-glutamate 5-semialdehyde + phosphate + NADP(+) = N-acetyl-L-glutamyl 5-phosphate + NADPH + H(+). The protein operates within amino-acid biosynthesis; L-arginine biosynthesis; N(2)-acetyl-L-ornithine from L-glutamate: step 3/4. Catalyzes the NADPH-dependent reduction of N-acetyl-5-glutamyl phosphate to yield N-acetyl-L-glutamate 5-semialdehyde. This is N-acetyl-gamma-glutamyl-phosphate reductase from Bordetella pertussis (strain Tohama I / ATCC BAA-589 / NCTC 13251).